A 266-amino-acid chain; its full sequence is 2-dehydro-3-deoxy-D-gluconate/2-dehydro-3-deoxy-phosphogluconate aldolase (266 aa).

Substrate contacts are provided by residues Ser-36 to Thr-37, Tyr-123 to Ile-125, and Lys-151 to Ser-153. The active-site Schiff-base intermediate with substrate is Lys-151.

This sequence belongs to the DapA family. KDPG aldolase subfamily. As to quaternary structure, homotetramer; dimer of dimers.

The catalysed reaction is 2-dehydro-3-deoxy-6-phospho-D-gluconate = D-glyceraldehyde 3-phosphate + pyruvate. It catalyses the reaction 2-dehydro-3-deoxy-D-gluconate = D-glyceraldehyde + pyruvate. It carries out the reaction 2-dehydro-3-deoxy-6-phospho-D-galactonate = D-glyceraldehyde 3-phosphate + pyruvate. The enzyme catalyses 2-dehydro-3-deoxy-D-galactonate = D-glyceraldehyde + pyruvate. The protein operates within carbohydrate acid metabolism; 2-dehydro-3-deoxy-D-gluconate degradation; D-glyceraldehyde 3-phosphate and pyruvate from 2-dehydro-3-deoxy-D-gluconate: step 2/2. In terms of biological role, involved in the degradation of glucose via the Entner-Doudoroff pathway. Catalyzes the reversible cleavage of 2-keto-3-deoxy-6-phosphogluconate (KDPG) and 2-keto-3-deoxygluconate (KDG) forming pyruvate and glyceraldehyde 3-phosphate or glyceraldehyde, respectively. It is also able to catalyze the reversible cleavage of 2-keto-3-deoxy-6-phosphogalactonate (KDPGal) and 2-keto-3-deoxygalactonate (KDGal). It is equally active with both D- and L-glyceraldehyde. The protein is 2-dehydro-3-deoxy-D-gluconate/2-dehydro-3-deoxy-phosphogluconate aldolase of Picrophilus torridus (strain ATCC 700027 / DSM 9790 / JCM 10055 / NBRC 100828 / KAW 2/3).